Here is a 446-residue protein sequence, read N- to C-terminus: Alkylglycerol monooxygenase (446 aa).

2 consecutive transmembrane segments (helical) span residues 43–63 (ATVY…AWKG) and 110–130 (WDSP…YYWF). One can recognise a Fatty acid hydroxylase domain in the interval 118-248 (LTFLGVDFGY…LIIWDRMFGT (131 aa)). The short motif at 131–135 (HRMAH) is the Histidine box-1 element. Residues 144–148 (HQTHH) carry the Histidine box-2 motif. Residues 167–187 (YFSWMFYWPMAFCIPPSVFAV) form a helical membrane-spanning segment. Residues 220 to 224 (HRVHH) carry the Histidine box-3 motif. The next 3 helical transmembrane spans lie at 339 to 359 (MMHF…KLIL), 362 to 382 (ATLL…GFIF), and 412 to 434 (VPYL…GLKA).

It belongs to the sterol desaturase family. TMEM195 subfamily. Fe cation is required as a cofactor.

The protein localises to the endoplasmic reticulum membrane. It catalyses the reaction 1-O-(1,2-saturated-alkyl)-sn-glycerol + (6R)-L-erythro-5,6,7,8-tetrahydrobiopterin + O2 = a 1-(1-hydroxyalkyl)-sn-glycerol + (6R)-L-erythro-6,7-dihydrobiopterin + H2O. In terms of biological role, glyceryl-ether monooxygenase that cleaves the O-alkyl bond of ether lipids. Ether lipids are essential components of brain membranes. This is Alkylglycerol monooxygenase (agmo) from Xenopus tropicalis (Western clawed frog).